The following is a 503-amino-acid chain: AMP phosphorylase (503 aa).

AMP contacts are provided by residues glycine 168, 194–199 (SRAITG), and serine 203. Aspartate 256 serves as the catalytic Proton donor. Residues serine 264 and lysine 288 each coordinate AMP.

It belongs to the thymidine/pyrimidine-nucleoside phosphorylase family. Type 2 subfamily.

It carries out the reaction AMP + phosphate = alpha-D-ribose 1,5-bisphosphate + adenine. It catalyses the reaction CMP + phosphate = cytosine + alpha-D-ribose 1,5-bisphosphate. The catalysed reaction is UMP + phosphate = alpha-D-ribose 1,5-bisphosphate + uracil. Its function is as follows. Catalyzes the conversion of AMP and phosphate to adenine and ribose 1,5-bisphosphate (R15P). Exhibits phosphorylase activity toward CMP and UMP in addition to AMP. Functions in an archaeal AMP degradation pathway, together with R15P isomerase and RubisCO. The protein is AMP phosphorylase of Methanocella arvoryzae (strain DSM 22066 / NBRC 105507 / MRE50).